A 758-amino-acid chain; its full sequence is 5-methyltetrahydropteroyltriglutamate--homocysteine methyltransferase (758 aa).

5-methyltetrahydropteroyltri-L-glutamate-binding positions include 16 to 19 (RELK) and K112. L-homocysteine-binding positions include 433–435 (IGS) and E486. L-methionine-binding positions include 433-435 (IGS) and E486. 5-methyltetrahydropteroyltri-L-glutamate contacts are provided by residues 517–518 (RC) and W563. Residue D601 participates in L-homocysteine binding. D601 provides a ligand contact to L-methionine. E607 contacts 5-methyltetrahydropteroyltri-L-glutamate. Residues H643, C645, and E667 each coordinate Zn(2+). The Proton donor role is filled by H696. Residue C728 coordinates Zn(2+).

It belongs to the vitamin-B12 independent methionine synthase family. It depends on Zn(2+) as a cofactor.

It catalyses the reaction 5-methyltetrahydropteroyltri-L-glutamate + L-homocysteine = tetrahydropteroyltri-L-glutamate + L-methionine. It functions in the pathway amino-acid biosynthesis; L-methionine biosynthesis via de novo pathway; L-methionine from L-homocysteine (MetE route): step 1/1. Catalyzes the transfer of a methyl group from 5-methyltetrahydrofolate to homocysteine resulting in methionine formation. This chain is 5-methyltetrahydropteroyltriglutamate--homocysteine methyltransferase, found in Neisseria meningitidis serogroup A / serotype 4A (strain DSM 15465 / Z2491).